Reading from the N-terminus, the 151-residue chain is MPHRSRDKKGRSRSVRPAHPTVPTWIQYTPEEVEQLVVELARRGFQPSQIGLILRDQYGIPLVRPITGKKLTKILEEHGIKYELPEDLLNLIRRALRIRKHLEEHPKDMASRRGLQLVESKIHRLVKYYKRVGKLPPDFVYNPQALSHLAT.

The span at 1–16 (MPHRSRDKKGRSRSVR) shows a compositional bias: basic residues. Positions 1 to 20 (MPHRSRDKKGRSRSVRPAHP) are disordered.

The protein belongs to the universal ribosomal protein uS15 family. In terms of assembly, part of the 30S ribosomal subunit.

The polypeptide is Small ribosomal subunit protein uS15 (Pyrobaculum aerophilum (strain ATCC 51768 / DSM 7523 / JCM 9630 / CIP 104966 / NBRC 100827 / IM2)).